A 147-amino-acid chain; its full sequence is Ribonuclease 4 (147 aa).

The N-terminal stretch at 1-28 (MALQRTHSLLLLLLLTLLGLGLVQPSYG) is a signal peptide. Gln29 is modified (pyrrolidone carboxylic acid). Arg35, His40, Lys68, Asn71, and Thr72 together coordinate dUMP. His40 acts as the Proton acceptor in catalysis. Cystine bridges form between Cys53/Cys109, Cys67/Cys120, Cys85/Cys135, and Cys92/Cys99. His144 serves as the catalytic Proton donor. Position 145 (Phe145) interacts with dUMP.

Belongs to the pancreatic ribonuclease family.

It localises to the secreted. Functionally, cleaves preferentially after uridine bases. Has antimicrobial activity against uropathogenic E.coli (UPEC). Probably contributes to urinary tract sterility. This chain is Ribonuclease 4 (RNASE4), found in Pongo abelii (Sumatran orangutan).